The sequence spans 229 residues: Demethylmenaquinone methyltransferase (229 aa).

S-adenosyl-L-methionine is bound by residues T58, D78, and 100–101 (DA).

This sequence belongs to the class I-like SAM-binding methyltransferase superfamily. MenG/UbiE family.

It catalyses the reaction a 2-demethylmenaquinol + S-adenosyl-L-methionine = a menaquinol + S-adenosyl-L-homocysteine + H(+). It functions in the pathway quinol/quinone metabolism; menaquinone biosynthesis; menaquinol from 1,4-dihydroxy-2-naphthoate: step 2/2. Its function is as follows. Methyltransferase required for the conversion of demethylmenaquinol (DMKH2) to menaquinol (MKH2). The polypeptide is Demethylmenaquinone methyltransferase (Thermotoga maritima (strain ATCC 43589 / DSM 3109 / JCM 10099 / NBRC 100826 / MSB8)).